We begin with the raw amino-acid sequence, 353 residues long: Histidinol-phosphate aminotransferase (353 aa).

N6-(pyridoxal phosphate)lysine is present on Lys211.

It belongs to the class-II pyridoxal-phosphate-dependent aminotransferase family. Histidinol-phosphate aminotransferase subfamily. In terms of assembly, homodimer. It depends on pyridoxal 5'-phosphate as a cofactor.

The enzyme catalyses L-histidinol phosphate + 2-oxoglutarate = 3-(imidazol-4-yl)-2-oxopropyl phosphate + L-glutamate. Its pathway is amino-acid biosynthesis; L-histidine biosynthesis; L-histidine from 5-phospho-alpha-D-ribose 1-diphosphate: step 7/9. The chain is Histidinol-phosphate aminotransferase from Klebsiella pneumoniae (strain 342).